Consider the following 69-residue polypeptide: Beta-defensin 11 (69 aa).

A signal peptide spans 1-23 (MRTLCSLLLIGCLLFSYDTPVVG). 3 disulfide bridges follow: Cys-35–Cys-64, Cys-42–Cys-57, and Cys-47–Cys-65.

It belongs to the beta-defensin family.

The protein localises to the secreted. Functionally, has antibacterial activity. This Rattus norvegicus (Rat) protein is Beta-defensin 11 (Defb11).